The following is a 457-amino-acid chain: MLKDTIAAIATPAGTGGIGIVRISGSEAASILNLLFKSSHSVTLFKPRYLYHGDLSDPQTGQVIDEVLVSLMKAPRSYTGEDTLEIYCHGGILVLESVLLAVLRSGARLADPGEFTRRAFLNDRIDLTQAEAVGDVIMARTSKGLEAAVSHLKGQLKQKIDSLRDELIDVQVLLESAIDFTEDVEFPSPSEVLSKLERLSSDLEALLSTYDQGKVYRHGATVVIAGKPNTGKSSLLNCLLQEKRAIVTPVPGTTRDFIEEAISIQGVSVRMIDTAGIHPTDDLIECEGIRMVWEKLATADGVILLLDGSKDLTDEDRKILKRLQGYNLLPVINKADLDHSLKEEDIIACFPGTDPLWVSAKFGEGIAVLKEKIYDLVLEKAGEQDGDVLINSLRHKMALEKTRQQVSQALASLQEGLSQEFAALDIREALEALGEIAGETVTEDILDRIFSSFCIGK.

3 residues coordinate (6S)-5-formyl-5,6,7,8-tetrahydrofolate: arginine 22, glutamate 85, and arginine 124. Residues 219–378 (GATVVIAGKP…LKEKIYDLVL (160 aa)) form the TrmE-type G domain. A K(+)-binding site is contributed by asparagine 229. GTP contacts are provided by residues 229–234 (NTGKSS), 248–254 (TPVPGTT), 273–276 (DTAG), and 333–336 (NKAD). Residue serine 233 coordinates Mg(2+). K(+)-binding residues include threonine 248, valine 250, and threonine 253. Mg(2+) is bound at residue threonine 254. Position 457 (lysine 457) interacts with (6S)-5-formyl-5,6,7,8-tetrahydrofolate.

It belongs to the TRAFAC class TrmE-Era-EngA-EngB-Septin-like GTPase superfamily. TrmE GTPase family. As to quaternary structure, homodimer. Heterotetramer of two MnmE and two MnmG subunits. The cofactor is K(+).

Its subcellular location is the cytoplasm. Functionally, exhibits a very high intrinsic GTPase hydrolysis rate. Involved in the addition of a carboxymethylaminomethyl (cmnm) group at the wobble position (U34) of certain tRNAs, forming tRNA-cmnm(5)s(2)U34. The sequence is that of tRNA modification GTPase MnmE from Syntrophus aciditrophicus (strain SB).